The following is a 371-amino-acid chain: GTPase Obg (371 aa).

Residues 1–159 enclose the Obg domain; the sequence is MKFVDEAYID…KNLKLELKVL (159 aa). In terms of domain architecture, OBG-type G spans 160–334; that stretch reads ADVGLLGMPN…LIRTIYKHVH (175 aa). GTP-binding positions include 166-173, 191-195, 213-216, 284-287, and 315-317; these read GMPNAGKS, FTTLH, DIPG, NKLD, and SAL. The Mg(2+) site is built by serine 173 and threonine 193.

It belongs to the TRAFAC class OBG-HflX-like GTPase superfamily. OBG GTPase family. As to quaternary structure, monomer. Mg(2+) is required as a cofactor.

The protein localises to the cytoplasm. An essential GTPase which binds GTP, GDP and possibly (p)ppGpp with moderate affinity, with high nucleotide exchange rates and a fairly low GTP hydrolysis rate. Plays a role in control of the cell cycle, stress response, ribosome biogenesis and in those bacteria that undergo differentiation, in morphogenesis control. In Delftia acidovorans (strain DSM 14801 / SPH-1), this protein is GTPase Obg.